Reading from the N-terminus, the 484-residue chain is Arginine ADP-riboxanase OspC2 (484 aa).

The NAD(+) site is built by His-143, Gln-144, Ser-145, Leu-149, Ile-162, Asn-172, Phe-188, His-206, Phe-211, Asp-231, and Glu-326. The active site involves Glu-326. 2 ANK repeats span residues 414 to 444 (LYDV…DVNK) and 451 to 480 (SGDT…VSGK).

The protein belongs to the OspC family.

Its subcellular location is the secreted. It catalyses the reaction L-arginyl-[protein] + NAD(+) = ADP-riboxanated L-argininyl-[protein] + nicotinamide + NH4(+) + H(+). ADP-riboxanase effector that mediates arginine ADP-riboxanation of host caspases. ADP-riboxanation of host apoptotic caspases (CASP3 and CASP9) prevents their activation, thereby inhibiting host cell extrinsic and intrinsic apoptosis. Does not catalyze ADP-riboxanation of host CASP4/CASP11 or CASP8. In contrast to Ospc1 and OspC3, not able to inactivate host calmodulin. The sequence is that of Arginine ADP-riboxanase OspC2 from Shigella flexneri.